The following is a 389-amino-acid chain: E3 ubiquitin-protein ligase E3D (389 aa).

Ala2 carries the N-acetylalanine modification. A BRAT1-like motif motif is present at residues 129 to 159; the sequence is PLPSENWGALVGEWCCHPDPFANKSLHPQEN. Zn(2+) is bound at residue Cys144. An interaction with UBE2C region spans residues 235 to 257; it reads QSSERSFPIIPRSWFVQSVIAQC. The segment at 353 to 389 is HECT-like; it reads LPSATCLELLLILSKSNANLPSSLRRVNSFQVAFLKM.

In terms of assembly, interacts with UBE2C/UbcH10 (E2 ubiquitin-conjugating enzyme). In vitro, interacts with cyclin-B. Post-translationally, ubiquitinated by UBCH10 (E2 ubiquitin-conjugating enzyme).

The protein resides in the cytoplasm. The catalysed reaction is S-ubiquitinyl-[E2 ubiquitin-conjugating enzyme]-L-cysteine + [acceptor protein]-L-lysine = [E2 ubiquitin-conjugating enzyme]-L-cysteine + N(6)-ubiquitinyl-[acceptor protein]-L-lysine.. Its pathway is protein modification; protein ubiquitination. E3 ubiquitin-protein ligase which accepts ubiquitin from specific E2 ubiquitin-conjugating enzymes, and transfers it to substrates, generally promoting their degradation by the proteasome. Independently of its E3 ubiquitin-protein ligase activity, acts as an inhibitor of CPSF3 endonuclease activity by blocking CPSF3 active site. The polypeptide is E3 ubiquitin-protein ligase E3D (UBE3D) (Homo sapiens (Human)).